Here is a 363-residue protein sequence, read N- to C-terminus: ADP-ribosylhydrolase ARH3 (363 aa).

Glutamate 41 lines the Mg(2+) pocket. Phosphothreonine is present on threonine 64. Mg(2+) is bound by residues threonine 76, aspartate 77, and aspartate 78. Residue aspartate 77 coordinates substrate. Substrate is bound by residues 146-152 (KGSYGNG), histidine 182, leucine 235, and isoleucine 271. Mg(2+) is bound by residues aspartate 314, aspartate 316, and threonine 317.

It belongs to the ADP-ribosylglycohydrolase family. As to quaternary structure, monomer. Mg(2+) serves as cofactor. In terms of tissue distribution, ubiquitous. Expressed in skin fibroblasts.

The protein localises to the nucleus. It is found in the cytoplasm. The protein resides in the chromosome. It localises to the mitochondrion matrix. It catalyses the reaction [(1''-&gt;2')-ADP-alpha-D-ribose](n) + H2O = [(1''-&gt;2')-ADP-alpha-D-ribose](n-1) + ADP-D-ribose. It carries out the reaction 1''-O-acetyl-ADP-alpha-D-ribose + H2O = ADP-D-ribose + acetate + H(+). The catalysed reaction is O-(ADP-D-ribosyl)-L-seryl-[protein] + H2O = ADP-D-ribose + L-seryl-[protein]. The enzyme catalyses alpha-NAD(+) + H2O = ADP-D-ribose + nicotinamide + H(+). With respect to regulation, the protein undergoes a dramatic conformational switch from closed to open states upon substrate-binding, which enables specific substrate recognition for the 1''-O-linkage. The glutamate flap (Glu-41) blocks substrate entrance to Mg(2+) in the unliganded closed state. In presence of substrate, Glu-41 is ejected from the active site: this closed-to-open transition significantly widens the substrate-binding channel and precisely positions the scissile 1''-O-linkage for cleavage while securing tightly 2'- and 3'-hydroxyls of ADP-ribose. ADP-ribosylhydrolase that preferentially hydrolyzes the scissile alpha-O-linkage attached to the anomeric C1'' position of ADP-ribose and acts on different substrates, such as proteins ADP-ribosylated on serine and threonine, free poly(ADP-ribose) and O-acetyl-ADP-D-ribose. Specifically acts as a serine mono-ADP-ribosylhydrolase by mediating the removal of mono-ADP-ribose attached to serine residues on proteins, thereby playing a key role in DNA damage response. Serine ADP-ribosylation of proteins constitutes the primary form of ADP-ribosylation of proteins in response to DNA damage. Does not hydrolyze ADP-ribosyl-arginine, -cysteine, -diphthamide, or -asparagine bonds. Also able to degrade protein free poly(ADP-ribose), which is synthesized in response to DNA damage: free poly(ADP-ribose) acts as a potent cell death signal and its degradation by ADPRHL2 protects cells from poly(ADP-ribose)-dependent cell death, a process named parthanatos. Also hydrolyzes free poly(ADP-ribose) in mitochondria. Specifically digests O-acetyl-ADP-D-ribose, a product of deacetylation reactions catalyzed by sirtuins. Specifically degrades 1''-O-acetyl-ADP-D-ribose isomer, rather than 2''-O-acetyl-ADP-D-ribose or 3''-O-acetyl-ADP-D-ribose isomers. The sequence is that of ADP-ribosylhydrolase ARH3 from Homo sapiens (Human).